A 341-amino-acid chain; its full sequence is GTPase Obg (341 aa).

Residues 1-159 (MKFLDQAKVY…RTLWLRLKLI (159 aa)) form the Obg domain. The OBG-type G domain occupies 160-327 (ADAGLIGLPN…MLRAGAHMIE (168 aa)). GTP contacts are provided by residues 166-173 (GLPNAGKS), 191-195 (FTTLY), 212-215 (DIPG), 279-282 (SQID), and 308-310 (SAV). Residues Ser-173 and Thr-193 each coordinate Mg(2+).

This sequence belongs to the TRAFAC class OBG-HflX-like GTPase superfamily. OBG GTPase family. As to quaternary structure, monomer. It depends on Mg(2+) as a cofactor.

It localises to the cytoplasm. Functionally, an essential GTPase which binds GTP, GDP and possibly (p)ppGpp with moderate affinity, with high nucleotide exchange rates and a fairly low GTP hydrolysis rate. Plays a role in control of the cell cycle, stress response, ribosome biogenesis and in those bacteria that undergo differentiation, in morphogenesis control. The protein is GTPase Obg of Bartonella quintana (strain Toulouse) (Rochalimaea quintana).